A 228-amino-acid polypeptide reads, in one-letter code: Interferon-induced transmembrane protein 10 (228 aa).

Over 1–154 (MREGKRGPPC…PDTTEVNDYY (154 aa)) the chain is Extracellular. Positions 29-49 (AQGPGQCPAPLGDPASTTDGA) are disordered. The helical transmembrane segment at 155–175 (LWSIFNFVYLNFCCLGFIALA) threads the bilayer. 2 S-palmitoyl cysteine lipidation sites follow: Cys167 and Cys168. The Cytoplasmic portion of the chain corresponds to 176-200 (YSLKVRDKKLLNDLNGAVEDAKTAR). Residues 201–221 (LFNITSSALAASCIILVFIFL) form a helical membrane-spanning segment. The Extracellular segment spans residues 222–228 (RYPLTDY).

Belongs to the CD225/Dispanin family.

The protein resides in the cell membrane. This chain is Interferon-induced transmembrane protein 10 (IFITM10), found in Homo sapiens (Human).